We begin with the raw amino-acid sequence, 340 residues long: Maltose epimerase (340 aa).

A substrate-binding site is contributed by arginine 79. Histidine 178 (proton donor) is an active-site residue. Aspartate 247 contributes to the substrate binding site. Glutamate 305 serves as the catalytic Proton acceptor.

It belongs to the aldose epimerase family.

The catalysed reaction is alpha-maltose = beta-maltose. It functions in the pathway carbohydrate metabolism; hexose metabolism. Functionally, catalyzes the interconversion of alpha and beta anomers of maltose. This chain is Maltose epimerase, found in Levilactobacillus brevis (strain ATCC 367 / BCRC 12310 / CIP 105137 / JCM 1170 / LMG 11437 / NCIMB 947 / NCTC 947) (Lactobacillus brevis).